A 95-amino-acid polypeptide reads, in one-letter code: Aspartyl/glutamyl-tRNA(Asn/Gln) amidotransferase subunit C (95 aa).

The protein belongs to the GatC family. Heterotrimer of A, B and C subunits.

It carries out the reaction L-glutamyl-tRNA(Gln) + L-glutamine + ATP + H2O = L-glutaminyl-tRNA(Gln) + L-glutamate + ADP + phosphate + H(+). The catalysed reaction is L-aspartyl-tRNA(Asn) + L-glutamine + ATP + H2O = L-asparaginyl-tRNA(Asn) + L-glutamate + ADP + phosphate + 2 H(+). Functionally, allows the formation of correctly charged Asn-tRNA(Asn) or Gln-tRNA(Gln) through the transamidation of misacylated Asp-tRNA(Asn) or Glu-tRNA(Gln) in organisms which lack either or both of asparaginyl-tRNA or glutaminyl-tRNA synthetases. The reaction takes place in the presence of glutamine and ATP through an activated phospho-Asp-tRNA(Asn) or phospho-Glu-tRNA(Gln). The protein is Aspartyl/glutamyl-tRNA(Asn/Gln) amidotransferase subunit C of Chromohalobacter salexigens (strain ATCC BAA-138 / DSM 3043 / CIP 106854 / NCIMB 13768 / 1H11).